The chain runs to 142 residues: FAD synthase (142 aa).

ATP is bound by residues Thr9–Phe10, His14–His17, Asp92, and Tyr119.

This sequence belongs to the archaeal FAD synthase family. Homodimer. A divalent metal cation serves as cofactor.

The enzyme catalyses FMN + ATP + H(+) = FAD + diphosphate. It functions in the pathway cofactor biosynthesis; FAD biosynthesis; FAD from FMN: step 1/1. Catalyzes the transfer of the AMP portion of ATP to flavin mononucleotide (FMN) to produce flavin adenine dinucleotide (FAD) coenzyme. This chain is FAD synthase, found in Halorhabdus utahensis (strain DSM 12940 / JCM 11049 / AX-2).